A 414-amino-acid polypeptide reads, in one-letter code: Serine/threonine transporter SstT (414 aa).

The next 8 helical transmembrane spans lie at 16–36 (GSLV…AWIS), 46–66 (LGTL…LMLV), 84–104 (ILFL…VFSF), 143–163 (ALLN…GFAL), 180–200 (AVTF…FGLV), 219–239 (LVVL…LLVF), 300–320 (MAGA…TLGV), and 332–352 (VVAS…LLLI).

Belongs to the dicarboxylate/amino acid:cation symporter (DAACS) (TC 2.A.23) family.

Its subcellular location is the cell inner membrane. It catalyses the reaction L-serine(in) + Na(+)(in) = L-serine(out) + Na(+)(out). The catalysed reaction is L-threonine(in) + Na(+)(in) = L-threonine(out) + Na(+)(out). Involved in the import of serine and threonine into the cell, with the concomitant import of sodium (symport system). This is Serine/threonine transporter SstT from Salmonella newport (strain SL254).